Reading from the N-terminus, the 209-residue chain is Germin-like protein (209 aa).

Residues 1 to 18 (MIVPIFFLFSLLFSSSHG) form the signal peptide. Cys-24 and Cys-39 are disulfide-bonded. The Cupin type-1 domain occupies 53-199 (SGLGITGNTT…ASFLDPAEIK (147 aa)). Asn-60 is a glycosylation site (N-linked (GlcNAc...) asparagine). Positions 101, 103, 108, and 147 each coordinate Mn(2+).

It is found in the secreted. Its subcellular location is the extracellular space. The protein localises to the apoplast. Functionally, has antibacterial activity against B.subtilis (MIC=5 ug), B.cereus (MIC=50 ug), A.hydrophila (MIC=2.5 ug), S.marcescens(MIC=10 ug), S.enterica (MIC=10 ug), P.entomophila (MIC=2.5 ug) and P.rhodesiae (MIC=10 ug). Has antifungal activity against F.solani KACC 40384 and F.oxysporum KACC 40032. Probably has no oxalate oxidase activity even if the active site is conserved. This is Germin-like protein from Morus alba (White mulberry).